Reading from the N-terminus, the 358-residue chain is Carbohydrate sulfotransferase 10 (358 aa).

Over 1–6 the chain is Cytoplasmic; it reads MHHQWL. A helical; Signal-anchor for type II membrane protein transmembrane segment spans residues 7-27; it reads LLAACFWVIFMFMVASKFITL. Residues 28–358 lie on the Lumenal side of the membrane; the sequence is TFKDPDGYGA…GYRVPDFLLN (331 aa). The N-linked (GlcNAc...) asparagine glycan is linked to Asn101. 3'-phosphoadenylyl sulfate is bound by residues 129-135 and 191-199; these read PKVGNTQ and RDPFERLIS. Asn318 carries N-linked (GlcNAc...) asparagine glycosylation.

The protein belongs to the sulfotransferase 2 family. Predominantly expressed in hypertrophic, prehypertrophic and proliferative chondrocytes at E12 but is down-regulated in epiphyseal chondrocytes.

It localises to the golgi apparatus membrane. Functionally, catalyzes the transfer of sulfate to position 3 of terminal glucuronic acid of both protein- and lipid-linked oligosaccharides. Participates in biosynthesis of HNK-1 carbohydrate structure, a sulfated glucuronyl-lactosaminyl residue carried by many neural recognition molecules, which is involved in cell interactions during ontogenetic development and in synaptic plasticity in the adult. This is Carbohydrate sulfotransferase 10 (CHST10) from Gallus gallus (Chicken).